Here is a 279-residue protein sequence, read N- to C-terminus: Undecaprenyl-diphosphatase (279 aa).

Helical transmembrane passes span 2-22 (LFIE…TEWL), 44-64 (AFME…VIVI), 85-105 (WQLW…AVPL), 113-133 (FNHM…FLWI), 163-183 (VLSI…AIIL), 188-208 (TVAA…YSGL), 225-245 (LLVL…VIKL), and 255-275 (FTVF…YSVF).

This sequence belongs to the UppP family.

Its subcellular location is the cell membrane. The catalysed reaction is di-trans,octa-cis-undecaprenyl diphosphate + H2O = di-trans,octa-cis-undecaprenyl phosphate + phosphate + H(+). Its function is as follows. Catalyzes the dephosphorylation of undecaprenyl diphosphate (UPP). Confers resistance to bacitracin. The chain is Undecaprenyl-diphosphatase from Streptococcus equi subsp. zooepidemicus (strain MGCS10565).